A 193-amino-acid polypeptide reads, in one-letter code: Potassium-transporting ATPase KdpC subunit (193 aa).

The chain crosses the membrane as a helical span at residues 11–31 (FTLVFMVLLGLVYPFVMTGIA).

The protein belongs to the KdpC family. The system is composed of three essential subunits: KdpA, KdpB and KdpC.

It localises to the cell membrane. In terms of biological role, part of the high-affinity ATP-driven potassium transport (or Kdp) system, which catalyzes the hydrolysis of ATP coupled with the electrogenic transport of potassium into the cytoplasm. This subunit acts as a catalytic chaperone that increases the ATP-binding affinity of the ATP-hydrolyzing subunit KdpB by the formation of a transient KdpB/KdpC/ATP ternary complex. The chain is Potassium-transporting ATPase KdpC subunit from Caldanaerobacter subterraneus subsp. tengcongensis (strain DSM 15242 / JCM 11007 / NBRC 100824 / MB4) (Thermoanaerobacter tengcongensis).